A 280-amino-acid chain; its full sequence is Endochitinase A (280 aa).

Positions 1–25 are cleaved as a signal peptide; it reads MANAPRILALGLLALLCAAAGPAAA. Residues 26–60 form the Chitin-binding type-1 domain; it reads QNCGCQPNFCCSKFGYCGTTDAYCGDGCQSGPCRS. Intrachain disulfides connect Cys28–Cys36, Cys30–Cys42, Cys35–Cys49, and Cys53–Cys58. The segment at 61–77 is hinge region (poly-Gly); it reads GGGGGGGGGGGGGGSGG. The catalytic stretch occupies residues 78 to 280; that stretch reads ANVANVVTDA…RVDPGPNLTC (203 aa). A disulfide bond links Cys100 and Cys149. The Proton donor role is filled by Glu144. Asn155 carries an N-linked (GlcNAc...) asparagine glycan. 2 disulfides stabilise this stretch: Cys161–Cys170 and Cys248–Cys280. A glycan (N-linked (GlcNAc...) asparagine) is linked at Asn277.

The protein belongs to the glycosyl hydrolase 19 family. Chitinase class IV subfamily.

The protein resides in the secreted. The catalysed reaction is Random endo-hydrolysis of N-acetyl-beta-D-glucosaminide (1-&gt;4)-beta-linkages in chitin and chitodextrins.. Its activity is regulated as follows. Inactivated by l-ethyl-3-(3-dimethylaminopropyl)carbodiimide (EDC) in the absence of exogenous nucleophiles (e.g. GlcNAc4, GlcNAc3 and GlcNAc2). Not inhibited by tetra-N-acetylchitopentaose or modified chitotetraose substrate TMG-chitotriomycin-pMP, containing a free, non-acetylated glucosaminyl residue or a N-trimethylamino glucosamine (TMG) residue at the non-reducing terminus, respectively. Its function is as follows. Defense against chitin-containing fungal pathogens. Hydrolyzes glycol chitin and tetra-N-acetylchitotetraose in vitro. Its action is countered by fungal polyglycine hydrolases and fungalysin, that cleave the chitin-binding domain from the protein. In Zea mays (Maize), this protein is Endochitinase A.